The sequence spans 34 residues: Stromal 70 kDa heat shock-related protein, chloroplastic (34 aa).

It belongs to the heat shock protein 70 family.

The protein resides in the plastid. The protein localises to the chloroplast stroma. Functionally, interacts with newly imported chloroplast proteins to assist in their maturation. This Cucurbita maxima (Pumpkin) protein is Stromal 70 kDa heat shock-related protein, chloroplastic.